Consider the following 323-residue polypeptide: Macrolide efflux protein A (323 aa).

A run of 9 helical transmembrane segments spans residues V6–V26, L51–I71, S105–W125, N128–V148, F182–F202, I219–G239, I245–L265, F270–V290, and Y303–L323.

Belongs to the major facilitator superfamily. Drug:H(+) antiporter-3 (DHA3) (TC 2.A.1.21) family.

The protein localises to the cell membrane. Confers resistance to 14-membered macrolides including erythromycin and to 15-membered macrolides but not to 16-membered macrolides, lincosamides or analogs of streptogramin B. May function as an efflux pump to regulate intracellular macrolide levels. This Enterococcus faecalis (Streptococcus faecalis) protein is Macrolide efflux protein A (mefA).